Consider the following 1467-residue polypeptide: Gag-Pol polyprotein (1467 aa).

A lipid anchor (N-myristoyl glycine; by host) is attached at Gly-2. Positions 16–22 match the Nuclear export signal motif; sequence FEHIRLR. A Nuclear localization signal motif is present at residues 26-32; it reads KKKYQIK. Residues 116 to 144 are disordered; sequence NAERNTTETSSGQKKNDKGVTVPPGGSQN. 2 consecutive CCHC-type zinc fingers follow at residues 402 to 419 and 423 to 440; these read VKCY…QCPE and MRCL…DCRG. Residues 535–606 form the Peptidase A2 domain; sequence IKALLDTGAD…TPINIIGRNL (72 aa). Catalysis depends on Asp-540, which acts as the For protease activity; shared with dimeric partner. The Reverse transcriptase domain maps to 662–852; sequence EGKISRVGGE…PPYEWMGYKL (191 aa). Mg(2+) contacts are provided by Asp-728, Asp-803, and Asp-804. The tract at residues 845-853 is RT 'primer grip'; the sequence is YEWMGYKLW. The Tryptophan repeat motif motif lies at 1015–1031; sequence WEQWWADYWQVSWIPEW. The RNase H type-1 domain occupies 1050-1173; sequence PIPKEDVYYV…IDKLVSKGIR (124 aa). The Mg(2+) site is built by Asp-1114 and Asp-1165. The Integrase-type zinc finger occupies 1179–1220; that stretch reads EKIEEAQEKHERYHNNWKNLADTYGLPQIVAKEIVAMCPKCQ. Zn(2+) contacts are provided by His-1188, His-1192, Cys-1216, and Cys-1219. Positions 1230 to 1380 constitute an Integrase catalytic domain; sequence VDASPGTWQM…TSAERLINII (151 aa). Mg(2+)-binding residues include Asp-1240 and Asp-1292. Residues 1399–1446 constitute a DNA-binding region (integrase-type); that stretch reads FRVYYREGRDPVWKGPAQLIWKGEGAVVLKDGSDLKVVPRRKAKIIKD. A disordered region spans residues 1447-1467; it reads YEPKQRVGNEGDVEGTRGSDN.

As to quaternary structure, homotrimer. Interacts with gp41 (via C-terminus). Homodimer. The active site consists of two apposed aspartic acid residues. In terms of assembly, heterodimer of p66 RT and p51 RT (RT p66/p51). Heterodimerization of RT is essential for DNA polymerase activity. Despite the sequence identities, p66 RT and p51 RT have distinct folding. As to quaternary structure, homotetramer; may further associate as a homohexadecamer. It depends on Mg(2+) as a cofactor. Specific enzymatic cleavages by the viral protease yield mature proteins. The protease is released by autocatalytic cleavage. The polyprotein is cleaved during and after budding, this process is termed maturation. Proteolytic cleavage of p66 RT removes the RNase H domain to yield the p51 RT subunit. In terms of processing, capsid protein p24 is phosphorylated.

It is found in the virion. It localises to the host nucleus. Its subcellular location is the host cytoplasm. The protein resides in the host cell membrane. The catalysed reaction is Specific for a P1 residue that is hydrophobic, and P1' variable, but often Pro.. It catalyses the reaction Endohydrolysis of RNA in RNA/DNA hybrids. Three different cleavage modes: 1. sequence-specific internal cleavage of RNA. Human immunodeficiency virus type 1 and Moloney murine leukemia virus enzymes prefer to cleave the RNA strand one nucleotide away from the RNA-DNA junction. 2. RNA 5'-end directed cleavage 13-19 nucleotides from the RNA end. 3. DNA 3'-end directed cleavage 15-20 nucleotides away from the primer terminus.. It carries out the reaction 3'-end directed exonucleolytic cleavage of viral RNA-DNA hybrid.. The enzyme catalyses DNA(n) + a 2'-deoxyribonucleoside 5'-triphosphate = DNA(n+1) + diphosphate. Its activity is regulated as follows. The viral protease is inhibited by many synthetic protease inhibitors (PIs), such as amprenavir, atazanavir, indinavir, loprinavir, nelfinavir, ritonavir and saquinavir. RT can be inhibited either by nucleoside RT inhibitors (NRTIs) or by non nucleoside RT inhibitors (NNRTIs). NRTIs act as chain terminators, whereas NNRTIs inhibit DNA polymerization by binding a small hydrophobic pocket near the RT active site and inducing an allosteric change in this region. Classical NRTIs are abacavir, adefovir (PMEA), didanosine (ddI), lamivudine (3TC), stavudine (d4T), tenofovir (PMPA), zalcitabine (ddC), and zidovudine (AZT). Classical NNRTIs are atevirdine (BHAP U-87201E), delavirdine, efavirenz (DMP-266), emivirine (I-EBU), and nevirapine (BI-RG-587). The tritherapies used as a basic effective treatment of AIDS associate two NRTIs and one NNRTI. Use of protease inhibitors in tritherapy regimens permit more ambitious therapeutic strategies. Gag-Pol polyprotein and Gag polyprotein may regulate their own translation, by the binding genomic RNA in the 5'-UTR. At low concentration, Gag-Pol and Gag would promote translation, whereas at high concentration, the polyproteins encapsidate genomic RNA and then shut off translation. Functionally, matrix protein p17 has two main functions: in infected cell, it targets Gag and Gag-pol polyproteins to the plasma membrane via a multipartite membrane-binding signal, that includes its myristointegration complex. The myristoylation signal and the NLS exert conflicting influences its subcellular localization. The key regulation of these motifs might be phosphorylation of a portion of MA molecules on the C-terminal tyrosine at the time of virus maturation, by virion-associated cellular tyrosine kinase. Implicated in the release from host cell mediated by Vpu. In terms of biological role, capsid protein p24 forms the conical core that encapsulates the genomic RNA-nucleocapsid complex in the virion. The core is constituted by capsid protein hexamer subunits. The core is disassembled soon after virion entry. Interaction with host PPIA/CYPA protects the virus from restriction by host TRIM5-alpha and from an unknown antiviral activity in host cells. This capsid restriction by TRIM5 is one of the factors which restricts SIV to the simian species. Its function is as follows. Nucleocapsid protein p7 encapsulates and protects viral dimeric unspliced (genomic) RNA. Binds these RNAs through its zinc fingers. Facilitates rearangement of nucleic acid secondary structure during retrotranscription of genomic RNA. This capability is referred to as nucleic acid chaperone activity. The aspartyl protease mediates proteolytic cleavages of Gag and Gag-Pol polyproteins during or shortly after the release of the virion from the plasma membrane. Cleavages take place as an ordered, step-wise cascade to yield mature proteins. This process is called maturation. Displays maximal activity during the budding process just prior to particle release from the cell. Also cleaves Nef and Vif, probably concomitantly with viral structural proteins on maturation of virus particles. Hydrolyzes host EIF4GI and PABP1 in order to shut off the capped cellular mRNA translation. The resulting inhibition of cellular protein synthesis serves to ensure maximal viral gene expression and to evade host immune response. Functionally, reverse transcriptase/ribonuclease H (RT) is a multifunctional enzyme that converts the viral dimeric RNA genome into dsDNA in the cytoplasm, shortly after virus entry into the cell. This enzyme displays a DNA polymerase activity that can copy either DNA or RNA templates, and a ribonuclease H (RNase H) activity that cleaves the RNA strand of RNA-DNA heteroduplexes in a partially processive 3' to 5' endonucleasic mode. Conversion of viral genomic RNA into dsDNA requires many steps. A tRNA binds to the primer-binding site (PBS) situated at the 5'-end of the viral RNA. RT uses the 3' end of the tRNA primer to perform a short round of RNA-dependent minus-strand DNA synthesis. The reading proceeds through the U5 region and ends after the repeated (R) region which is present at both ends of viral RNA. The portion of the RNA-DNA heteroduplex is digested by the RNase H, resulting in a ssDNA product attached to the tRNA primer. This ssDNA/tRNA hybridizes with the identical R region situated at the 3' end of viral RNA. This template exchange, known as minus-strand DNA strong stop transfer, can be either intra- or intermolecular. RT uses the 3' end of this newly synthesized short ssDNA to perform the RNA-dependent minus-strand DNA synthesis of the whole template. RNase H digests the RNA template except for two polypurine tracts (PPTs) situated at the 5'-end and near the center of the genome. It is not clear if both polymerase and RNase H activities are simultaneous. RNase H can probably proceed both in a polymerase-dependent (RNA cut into small fragments by the same RT performing DNA synthesis) and a polymerase-independent mode (cleavage of remaining RNA fragments by free RTs). Secondly, RT performs DNA-directed plus-strand DNA synthesis using the PPTs that have not been removed by RNase H as primers. PPTs and tRNA primers are then removed by RNase H. The 3' and 5' ssDNA PBS regions hybridize to form a circular dsDNA intermediate. Strand displacement synthesis by RT to the PBS and PPT ends produces a blunt ended, linear dsDNA copy of the viral genome that includes long terminal repeats (LTRs) at both ends. In terms of biological role, integrase catalyzes viral DNA integration into the host chromosome, by performing a series of DNA cutting and joining reactions. This enzyme activity takes place after virion entry into a cell and reverse transcription of the RNA genome in dsDNA. The first step in the integration process is 3' processing. This step requires a complex comprising the viral genome, matrix protein, Vpr and integrase. This complex is called the pre-integration complex (PIC). The integrase protein removes 2 nucleotides from each 3' end of the viral DNA, leaving recessed CA OH's at the 3' ends. In the second step, the PIC enters cell nucleus. This process is mediated through integrase and Vpr proteins, and allows the virus to infect a non dividing cell. This ability to enter the nucleus is specific of lentiviruses, other retroviruses cannot and rely on cell division to access cell chromosomes. In the third step, termed strand transfer, the integrase protein joins the previously processed 3' ends to the 5' ends of strands of target cellular DNA at the site of integration. The 5'-ends are produced by integrase-catalyzed staggered cuts, 5 bp apart. A Y-shaped, gapped, recombination intermediate results, with the 5'-ends of the viral DNA strands and the 3' ends of target DNA strands remaining unjoined, flanking a gap of 5 bp. The last step is viral DNA integration into host chromosome. This involves host DNA repair synthesis in which the 5 bp gaps between the unjoined strands are filled in and then ligated. Since this process occurs at both cuts flanking the SIV genome, a 5 bp duplication of host DNA is produced at the ends of SIV integration. Alternatively, Integrase may catalyze the excision of viral DNA just after strand transfer, this is termed disintegration. The chain is Gag-Pol polyprotein (gag-pol) from Cercopithecidae (Old World monkeys).